Consider the following 1291-residue polypeptide: DNA-directed RNA polymerase subunit beta' (1291 aa).

Zn(2+) contacts are provided by C60, C62, C75, and C78. Residues D535, D537, and D539 each coordinate Mg(2+). Positions 878, 954, 961, and 964 each coordinate Zn(2+).

The protein belongs to the RNA polymerase beta' chain family. The RNAP catalytic core consists of 2 alpha, 1 beta, 1 beta' and 1 omega subunit. When a sigma factor is associated with the core the holoenzyme is formed, which can initiate transcription. Mg(2+) is required as a cofactor. Requires Zn(2+) as cofactor.

The enzyme catalyses RNA(n) + a ribonucleoside 5'-triphosphate = RNA(n+1) + diphosphate. Functionally, DNA-dependent RNA polymerase catalyzes the transcription of DNA into RNA using the four ribonucleoside triphosphates as substrates. This Thermobifida fusca (strain YX) protein is DNA-directed RNA polymerase subunit beta'.